Consider the following 333-residue polypeptide: Ketol-acid reductoisomerase (NADP(+)) (333 aa).

The KARI N-terminal Rossmann domain maps to 1 to 179; the sequence is MFYDDDADLS…GGTRAGVIKT (179 aa). Residues 22–25, Lys-45, Ser-48, Ser-50, and 80–83 each bind NADP(+); these read YGSQ and DTAQ. The active site involves His-105. Position 131 (Gly-131) interacts with NADP(+). The KARI C-terminal knotted domain maps to 180–325; sequence TFKDETETDL…KKLRDLMSWV (146 aa). The Mg(2+) site is built by Asp-188, Glu-192, Glu-224, and Glu-228. Ser-249 contacts substrate.

The protein belongs to the ketol-acid reductoisomerase family. Mg(2+) is required as a cofactor.

The catalysed reaction is (2R)-2,3-dihydroxy-3-methylbutanoate + NADP(+) = (2S)-2-acetolactate + NADPH + H(+). It carries out the reaction (2R,3R)-2,3-dihydroxy-3-methylpentanoate + NADP(+) = (S)-2-ethyl-2-hydroxy-3-oxobutanoate + NADPH + H(+). It functions in the pathway amino-acid biosynthesis; L-isoleucine biosynthesis; L-isoleucine from 2-oxobutanoate: step 2/4. Its pathway is amino-acid biosynthesis; L-valine biosynthesis; L-valine from pyruvate: step 2/4. Its function is as follows. Involved in the biosynthesis of branched-chain amino acids (BCAA). Catalyzes an alkyl-migration followed by a ketol-acid reduction of (S)-2-acetolactate (S2AL) to yield (R)-2,3-dihydroxy-isovalerate. In the isomerase reaction, S2AL is rearranged via a Mg-dependent methyl migration to produce 3-hydroxy-3-methyl-2-ketobutyrate (HMKB). In the reductase reaction, this 2-ketoacid undergoes a metal-dependent reduction by NADPH to yield (R)-2,3-dihydroxy-isovalerate. This is Ketol-acid reductoisomerase (NADP(+)) from Mycobacterium bovis (strain ATCC BAA-935 / AF2122/97).